Reading from the N-terminus, the 322-residue chain is NAD(P)H-dependent D-xylose reductase (322 aa).

Tyr-52 (proton donor) is an active-site residue. His-114 serves as a coordination point for substrate. NAD(+) contacts are provided by residues 169–170 (SN), 218–227 (SSFGPQSFVE), and 274–284 (KSNLPERLVQN).

The protein belongs to the aldo/keto reductase family. Homodimer.

The enzyme catalyses xylitol + NAD(+) = D-xylose + NADH + H(+). The catalysed reaction is xylitol + NADP(+) = D-xylose + NADPH + H(+). It participates in carbohydrate metabolism; D-xylose degradation. Reduces D-xylose into xylitol. Has a preference for NADPH, but can also utilize NADH as cosubstrate. The protein is NAD(P)H-dependent D-xylose reductase (XYL1) of Candida tenuis (Yeast).